Here is a 945-residue protein sequence, read N- to C-terminus: Alanine--tRNA ligase (945 aa).

Zn(2+) contacts are provided by H564, H568, C666, and H670. Positions 911–945 are disordered; sequence SGGGRPDMAQAGGKDASKLPEALQQARETMTEKLG.

It belongs to the class-II aminoacyl-tRNA synthetase family. The cofactor is Zn(2+).

The protein resides in the cytoplasm. The enzyme catalyses tRNA(Ala) + L-alanine + ATP = L-alanyl-tRNA(Ala) + AMP + diphosphate. Its function is as follows. Catalyzes the attachment of alanine to tRNA(Ala) in a two-step reaction: alanine is first activated by ATP to form Ala-AMP and then transferred to the acceptor end of tRNA(Ala). Also edits incorrectly charged Ser-tRNA(Ala) and Gly-tRNA(Ala) via its editing domain. In Rhodopirellula baltica (strain DSM 10527 / NCIMB 13988 / SH1), this protein is Alanine--tRNA ligase.